The sequence spans 177 residues: Antigen TpF1 (177 aa).

It belongs to the Dps family. As to quaternary structure, homodecamer; either linked or stabilized by disulfide bonds.

May play an important structural role in the outer membrane. The protein is Antigen TpF1 (tpf1) of Treponema pallidum (strain Nichols).